Reading from the N-terminus, the 333-residue chain is MVKVGINGFGRIGRLVTRAAFLTKKVEIVAINDPFIDLDYMVYMFQYDSTHGKYKGEVKAEGGKLVIDGHAITVYSERDPANIKWGDAGATYVVESTGVFTTIEKASAHIKGGAKRVIISAPSADAPMFVMGVNHEKYDNSLTVVSNASCTTNCLAPLAKVINDNFVIVEGLMSTVHAITATQKTVDGPSGKLWRDGRGASQNIIPASTGAAKAVGKVIPELNGKLTGMAFRVPTPNVSVVDLTVRLEKPAKYDEIKKVVKAAADGPMKGILGYTEHQVVSTDFNGDCRSSIFDAGAGIALNDHFVKLVTWYDNEFGYSNRVCDLMAHMASKE.

Residues 11-12, Asp-33, Arg-78, and Ser-120 contribute to the NAD(+) site; that span reads RI. D-glyceraldehyde 3-phosphate contacts are provided by residues 149–151, Thr-180, 209–210, and Arg-232; these read SCT and TG. The active-site Nucleophile is Cys-150. Cys-150 carries the S-nitrosocysteine modification. Residue Asn-314 coordinates NAD(+).

The protein belongs to the glyceraldehyde-3-phosphate dehydrogenase family. Homotetramer. In terms of processing, S-nitrosylation of Cys-150 leads to translocation to the nucleus.

It localises to the cytoplasm. Its subcellular location is the cytosol. It is found in the cytoskeleton. The protein localises to the nucleus. It catalyses the reaction D-glyceraldehyde 3-phosphate + phosphate + NAD(+) = (2R)-3-phospho-glyceroyl phosphate + NADH + H(+). The catalysed reaction is S-nitroso-L-cysteinyl-[GAPDH] + L-cysteinyl-[protein] = L-cysteinyl-[GAPDH] + S-nitroso-L-cysteinyl-[protein]. The protein operates within carbohydrate degradation; glycolysis; pyruvate from D-glyceraldehyde 3-phosphate: step 1/5. Has both glyceraldehyde-3-phosphate dehydrogenase and nitrosylase activities, thereby playing a role in glycolysis and nuclear functions, respectively. Glyceraldehyde-3-phosphate dehydrogenase is a key enzyme in glycolysis that catalyzes the first step of the pathway by converting D-glyceraldehyde 3-phosphate (G3P) into 3-phospho-D-glyceroyl phosphate. Participates in nuclear events including transcription, RNA transport, DNA replication and apoptosis. Nuclear functions are probably due to the nitrosylase activity that mediates cysteine S-nitrosylation of nuclear target proteins such as SIRT1, HDAC2 and PRKDC. This Danio rerio (Zebrafish) protein is Glyceraldehyde-3-phosphate dehydrogenase.